The primary structure comprises 282 residues: ATP synthase subunit a (282 aa).

Helical transmembrane passes span 38 to 58, 97 to 117, 145 to 165, 187 to 207, 225 to 247, and 261 to 281; these read VDSM…LWLA, FVAP…AMDM, VVPT…LLLC, FGSH…EFVA, LIFI…GHIV, and TLQA…AHEG.

The protein belongs to the ATPase A chain family. In terms of assembly, F-type ATPases have 2 components, CF(1) - the catalytic core - and CF(0) - the membrane proton channel. CF(1) has five subunits: alpha(3), beta(3), gamma(1), delta(1), epsilon(1). CF(0) has three main subunits: a(1), b(2) and c(9-12). The alpha and beta chains form an alternating ring which encloses part of the gamma chain. CF(1) is attached to CF(0) by a central stalk formed by the gamma and epsilon chains, while a peripheral stalk is formed by the delta and b chains.

The protein localises to the cell inner membrane. Key component of the proton channel; it plays a direct role in the translocation of protons across the membrane. In Azoarcus sp. (strain BH72), this protein is ATP synthase subunit a.